The following is a 404-amino-acid chain: MIGKIKLITRDSFNKLILPVYNPAFFIPVKGKGSRLWDQKGKEYIDFSGGIAVTSLGHCHPVLNKVLRQQSKKLWHISNIFTNEPALRLADKLISSSFASRVFFANSGAEANEAAFKLARYYSSKIYNLKKNKIISFYNSFHGRTFFTVSVGGQAKYSDFFGPKPPAIMHAKFNEINSVKSIIDDNTCAVVMELIQGEGGIVPADVAFVREIRDLCYKYNALLIFDEIQTGIGRTSKLYAYEHYEVQPDILTIAKSLGSGFPISATLTTNGIASVIKPGIHGTTYGGNPLACSIAESVVNIVNTKKFLLGVEKKSKKIISELNIINKRFGLFTEIRGKGLLIGIVLRPELSEEIHNILNALFLEGVIVLTAGKNVIRLAPSLIISKRDIVEGMKRFYCALEKCL.

Pyridoxal 5'-phosphate contacts are provided by residues 108-109 (GA) and phenylalanine 141. N(2)-acetyl-L-ornithine is bound at residue arginine 144. Position 226–229 (226–229 (DEIQ)) interacts with pyridoxal 5'-phosphate. Lysine 255 is subject to N6-(pyridoxal phosphate)lysine. N(2)-acetyl-L-ornithine is bound at residue threonine 283. Position 284 (threonine 284) interacts with pyridoxal 5'-phosphate.

It belongs to the class-III pyridoxal-phosphate-dependent aminotransferase family. ArgD subfamily. Homodimer. Requires pyridoxal 5'-phosphate as cofactor.

Its subcellular location is the cytoplasm. It carries out the reaction N(2)-acetyl-L-ornithine + 2-oxoglutarate = N-acetyl-L-glutamate 5-semialdehyde + L-glutamate. It catalyses the reaction N-succinyl-(2S,6S)-2,6-diaminopimelate + 2-oxoglutarate = (S)-2-succinylamino-6-oxoheptanedioate + L-glutamate. The protein operates within amino-acid biosynthesis; L-arginine biosynthesis; N(2)-acetyl-L-ornithine from L-glutamate: step 4/4. Its pathway is amino-acid biosynthesis; L-lysine biosynthesis via DAP pathway; LL-2,6-diaminopimelate from (S)-tetrahydrodipicolinate (succinylase route): step 2/3. Functionally, involved in both the arginine and lysine biosynthetic pathways. The sequence is that of Acetylornithine/succinyldiaminopimelate aminotransferase from Buchnera aphidicola subsp. Schizaphis graminum (strain Sg).